Here is a 330-residue protein sequence, read N- to C-terminus: Beta-ketoacyl-[acyl-carrier-protein] synthase III (330 aa).

Catalysis depends on residues C115 and H255. Positions 256–260 (QANFR) are ACP-binding. The active site involves N285.

Belongs to the thiolase-like superfamily. FabH family. As to quaternary structure, homodimer.

The protein resides in the cytoplasm. The catalysed reaction is malonyl-[ACP] + acetyl-CoA + H(+) = 3-oxobutanoyl-[ACP] + CO2 + CoA. It functions in the pathway lipid metabolism; fatty acid biosynthesis. Catalyzes the condensation reaction of fatty acid synthesis by the addition to an acyl acceptor of two carbons from malonyl-ACP. Catalyzes the first condensation reaction which initiates fatty acid synthesis and may therefore play a role in governing the total rate of fatty acid production. Possesses both acetoacetyl-ACP synthase and acetyl transacylase activities. Its substrate specificity determines the biosynthesis of branched-chain and/or straight-chain of fatty acids. In Helicobacter pylori (strain P12), this protein is Beta-ketoacyl-[acyl-carrier-protein] synthase III.